A 147-amino-acid chain; its full sequence is MDLSNLRPAIGSTKNRKRIGRGPGSGNGKTAGKGHKGQNARSGGGVKPGFEGGQMPLQRRLPKRGFKSLNKKVYALVNLRDLQDIFEAGSVVDIEALGQNGLVSRIYDGIKILGDGDLDKALTVKAHKFSQSAIAKIEAAGGKAEVI.

A disordered region spans residues 1–62 (MDLSNLRPAI…GQMPLQRRLP (62 aa)). Composition is skewed to gly residues over residues 21-31 (RGPGSGNGKTA) and 42-52 (SGGGVKPGFEG).

The protein belongs to the universal ribosomal protein uL15 family. In terms of assembly, part of the 50S ribosomal subunit.

In terms of biological role, binds to the 23S rRNA. The polypeptide is Large ribosomal subunit protein uL15 (Syntrophotalea carbinolica (strain DSM 2380 / NBRC 103641 / GraBd1) (Pelobacter carbinolicus)).